A 203-amino-acid polypeptide reads, in one-letter code: Protein-methionine-sulfoxide reductase heme-binding subunit MsrQ (203 aa).

5 consecutive transmembrane segments (helical) span residues 13-33 (IAIWLAATLPLLWLVLSINLG), 79-99 (LLGLWCFAWGTLHLLSYSILE), 116-136 (PYLTLGIISWLVLLALALTST), 147-167 (WQKLHNWVYVVAILAPIHYLW), and 169-189 (VKTLSPWPIIYAVMAALLLLL).

Belongs to the MsrQ family. In terms of assembly, heterodimer of a catalytic subunit (MsrP) and a heme-binding subunit (MsrQ). FMN is required as a cofactor. It depends on heme b as a cofactor.

It localises to the cell inner membrane. Functionally, part of the MsrPQ system that repairs oxidized periplasmic proteins containing methionine sulfoxide residues (Met-O), using respiratory chain electrons. Thus protects these proteins from oxidative-stress damage caused by reactive species of oxygen and chlorine generated by the host defense mechanisms. MsrPQ is essential for the maintenance of envelope integrity under bleach stress, rescuing a wide series of structurally unrelated periplasmic proteins from methionine oxidation. MsrQ provides electrons for reduction to the reductase catalytic subunit MsrP, using the quinone pool of the respiratory chain. The sequence is that of Protein-methionine-sulfoxide reductase heme-binding subunit MsrQ from Yersinia pseudotuberculosis serotype O:1b (strain IP 31758).